The following is a 431-amino-acid chain: Tyrosine--tRNA ligase (431 aa).

Position 34 (Tyr-34) interacts with L-tyrosine. Positions 39 to 48 (PTADSLHIGH) match the 'HIGH' region motif. Residues Tyr-171 and Gln-175 each coordinate L-tyrosine. The short motif at 231 to 235 (KFGKT) is the 'KMSKS' region element. Lys-234 provides a ligand contact to ATP. The 70-residue stretch at 353-422 (INVVEALVKT…GKYTILRRGK (70 aa)) folds into the S4 RNA-binding domain.

It belongs to the class-I aminoacyl-tRNA synthetase family. TyrS type 1 subfamily. As to quaternary structure, homodimer.

It is found in the cytoplasm. It carries out the reaction tRNA(Tyr) + L-tyrosine + ATP = L-tyrosyl-tRNA(Tyr) + AMP + diphosphate + H(+). In terms of biological role, catalyzes the attachment of tyrosine to tRNA(Tyr) in a two-step reaction: tyrosine is first activated by ATP to form Tyr-AMP and then transferred to the acceptor end of tRNA(Tyr). The protein is Tyrosine--tRNA ligase of Neisseria meningitidis serogroup A / serotype 4A (strain DSM 15465 / Z2491).